Reading from the N-terminus, the 485-residue chain is Glutamyl-tRNA(Gln) amidotransferase subunit A (485 aa).

Residues Lys76 and Ser155 each act as charge relay system in the active site. The Acyl-ester intermediate role is filled by Ser179.

This sequence belongs to the amidase family. GatA subfamily. As to quaternary structure, heterotrimer of A, B and C subunits.

It carries out the reaction L-glutamyl-tRNA(Gln) + L-glutamine + ATP + H2O = L-glutaminyl-tRNA(Gln) + L-glutamate + ADP + phosphate + H(+). Functionally, allows the formation of correctly charged Gln-tRNA(Gln) through the transamidation of misacylated Glu-tRNA(Gln) in organisms which lack glutaminyl-tRNA synthetase. The reaction takes place in the presence of glutamine and ATP through an activated gamma-phospho-Glu-tRNA(Gln). This chain is Glutamyl-tRNA(Gln) amidotransferase subunit A, found in Marinobacter nauticus (strain ATCC 700491 / DSM 11845 / VT8) (Marinobacter aquaeolei).